The sequence spans 595 residues: Aspartate--tRNA(Asp/Asn) ligase (595 aa).

Residue Glu-175 participates in L-aspartate binding. The tract at residues 199–202 (QQYK) is aspartate. L-aspartate is bound by residues Arg-221 and His-454. 221-223 (RDE) provides a ligand contact to ATP. Glu-488 contributes to the ATP binding site. Arg-495 is a binding site for L-aspartate. 540–543 (GIDR) lines the ATP pocket.

The protein belongs to the class-II aminoacyl-tRNA synthetase family. Type 1 subfamily. As to quaternary structure, homodimer.

Its subcellular location is the cytoplasm. The catalysed reaction is tRNA(Asx) + L-aspartate + ATP = L-aspartyl-tRNA(Asx) + AMP + diphosphate. In terms of biological role, aspartyl-tRNA synthetase with relaxed tRNA specificity since it is able to aspartylate not only its cognate tRNA(Asp) but also tRNA(Asn). Reaction proceeds in two steps: L-aspartate is first activated by ATP to form Asp-AMP and then transferred to the acceptor end of tRNA(Asp/Asn). This is Aspartate--tRNA(Asp/Asn) ligase from Brucella abortus (strain S19).